Here is a 51-residue protein sequence, read N- to C-terminus: Sperm protamine P1 (51 aa).

Cystine bridges form between Cys7–Cys15 and Cys40–Cys48.

It belongs to the protamine P1 family. As to quaternary structure, cross-linked by interchain disulfide bonds around the DNA-helix. Phosphorylated by SRPK1. As to expression, testis.

The protein localises to the nucleus. It localises to the chromosome. In terms of biological role, protamines substitute for histones in the chromatin of sperm during the haploid phase of spermatogenesis. They compact sperm DNA into a highly condensed, stable and inactive complex. The polypeptide is Sperm protamine P1 (PRM1) (Bos taurus (Bovine)).